A 194-amino-acid chain; its full sequence is dTTP/UTP pyrophosphatase (194 aa).

The active-site Proton acceptor is Asp-66.

It belongs to the Maf family. YhdE subfamily. A divalent metal cation serves as cofactor.

It is found in the cytoplasm. The enzyme catalyses dTTP + H2O = dTMP + diphosphate + H(+). It carries out the reaction UTP + H2O = UMP + diphosphate + H(+). Functionally, nucleoside triphosphate pyrophosphatase that hydrolyzes dTTP and UTP. May have a dual role in cell division arrest and in preventing the incorporation of modified nucleotides into cellular nucleic acids. This chain is dTTP/UTP pyrophosphatase, found in Anaeromyxobacter dehalogenans (strain 2CP-1 / ATCC BAA-258).